The chain runs to 182 residues: UPF0397 protein SPG_0438 (182 aa).

5 consecutive transmembrane segments (helical) span residues 10–30, 46–66, 73–93, 109–129, and 148–168; these read VVAV…NIPT, LLSI…GHAI, YGLW…VGLF, ILIF…VLAP, and IVAG…LLLA.

Belongs to the UPF0397 family.

The protein resides in the cell membrane. This chain is UPF0397 protein SPG_0438, found in Streptococcus pneumoniae serotype 19F (strain G54).